The chain runs to 363 residues: NAD(P)H-quinone oxidoreductase subunit 1, chloroplastic (363 aa).

The next 7 helical transmembrane spans lie at 28–48, 98–118, 129–149, 253–273, 274–294, 300–320, and 336–356; these read WVLA…LVIV, FSIG…VIPF, IGIF…LMSG, FGLF…FVTV, LYLG…LVEI, IFGT…FLFI, and LLNL…LLTT.

Belongs to the complex I subunit 1 family. As to quaternary structure, NDH is composed of at least 16 different subunits, 5 of which are encoded in the nucleus.

The protein localises to the plastid. The protein resides in the chloroplast thylakoid membrane. The enzyme catalyses a plastoquinone + NADH + (n+1) H(+)(in) = a plastoquinol + NAD(+) + n H(+)(out). The catalysed reaction is a plastoquinone + NADPH + (n+1) H(+)(in) = a plastoquinol + NADP(+) + n H(+)(out). Its function is as follows. NDH shuttles electrons from NAD(P)H:plastoquinone, via FMN and iron-sulfur (Fe-S) centers, to quinones in the photosynthetic chain and possibly in a chloroplast respiratory chain. The immediate electron acceptor for the enzyme in this species is believed to be plastoquinone. Couples the redox reaction to proton translocation, and thus conserves the redox energy in a proton gradient. This is NAD(P)H-quinone oxidoreductase subunit 1, chloroplastic from Citrus sinensis (Sweet orange).